The following is a 321-amino-acid chain: MERFVRVPYGLYQGYGSTVPLGQPGLSGHKQPDWRQNMGPPTFLARPGLLVPANAPDYCIDPYKRAQLKAILSQMNPSLSPRLCKPNTKEVGVQVSPRVDKAVQCSLGPRTLSSCSPWDGRDPQEPLPACGVTSPATGRRGLIRLRRDGDEAESKALPGPAEASQPQPPSRRSGADRQEEPGQLEESGEKDAPCPQETKSKQVPGDAASEPLRRPNFQFLEPKYGYFHCKDCKTRWESAYVWCISGTNKVYFKQLCCKCQKSFNPYRVEAIQCQTCSKSHCSCPQKKRHIDLRRPHRQELCGRCKDKRFSCGNIYSFKYVM.

Residues 110–214 form a disordered region; that stretch reads RTLSSCSPWD…GDAASEPLRR (105 aa). Positions 145–154 are enriched in basic and acidic residues; sequence LRRDGDEAES. The 3CxxC-type zinc-finger motif lies at 222–307; it reads PKYGYFHCKD…QELCGRCKDK (86 aa).

It belongs to the ZAR1 family. Interacts with YBX2.

Its subcellular location is the cytoplasm. It is found in the cytoplasmic ribonucleoprotein granule. MRNA-binding protein required for maternal mRNA storage, translation and degradation during oocyte maturation. Probably promotes formation of some phase-separated membraneless compartment that stores maternal mRNAs in oocytes: acts by undergoing liquid-liquid phase separation upon binding to maternal mRNAs. Binds to the 3'-UTR of maternal mRNAs, inhibiting their translation. The sequence is that of Protein ZAR1-like from Homo sapiens (Human).